The chain runs to 103 residues: Large ribosomal subunit protein bL21 (103 aa).

It belongs to the bacterial ribosomal protein bL21 family. In terms of assembly, part of the 50S ribosomal subunit. Contacts protein L20.

Functionally, this protein binds to 23S rRNA in the presence of protein L20. This chain is Large ribosomal subunit protein bL21, found in Cupriavidus necator (strain ATCC 17699 / DSM 428 / KCTC 22496 / NCIMB 10442 / H16 / Stanier 337) (Ralstonia eutropha).